The following is an 88-amino-acid chain: Small ribosomal subunit protein uS15 (88 aa).

The protein belongs to the universal ribosomal protein uS15 family. As to quaternary structure, part of the 30S ribosomal subunit. Forms a bridge to the 50S subunit in the 70S ribosome, contacting the 23S rRNA.

Functionally, one of the primary rRNA binding proteins, it binds directly to 16S rRNA where it helps nucleate assembly of the platform of the 30S subunit by binding and bridging several RNA helices of the 16S rRNA. In terms of biological role, forms an intersubunit bridge (bridge B4) with the 23S rRNA of the 50S subunit in the ribosome. The sequence is that of Small ribosomal subunit protein uS15 from Halothermothrix orenii (strain H 168 / OCM 544 / DSM 9562).